The following is a 518-amino-acid chain: MFS-type transporter cnsO (518 aa).

Polar residues predominate over residues 1 to 13; sequence MESTDSSPPLSMT. The interval 1–24 is disordered; the sequence is MESTDSSPPLSMTDTEKKGDAVTT. 9 helical membrane passes run 99–119, 122–142, 156–176, 187–207, 221–241, 298–318, 334–354, 362–382, and 392–412; these read LALM…NIML, VGPK…TTLT, LMLG…LSMW, AIFY…AYGV, WLFL…LFCL, FMMM…SYTL, VMTT…GYIS, LCIM…WITV, and YFAI…VGAW. Residue Asn416 is glycosylated (N-linked (GlcNAc...) asparagine). 2 consecutive transmembrane segments (helical) span residues 427–447 and 455–475; these read IGLL…NIYI and PLGF…PATI.

Belongs to the major facilitator superfamily.

The protein resides in the cell membrane. Functionally, MFS-type transporter; part of the gene cluster that mediates the biosynthesis of communesins, a prominent class of indole alkaloids with great potential as pharmaceuticals. With the MFS transporter cnsL, is most likely responsible for cummunesins secretion and thereby may contribute to intrinsic resistance. The chain is MFS-type transporter cnsO from Penicillium expansum (Blue mold rot fungus).